A 199-amino-acid chain; its full sequence is Potassium-transporting ATPase KdpC subunit (199 aa).

The chain crosses the membrane as a helical span at residues 21–43 (LALLFVCGVVYTGTVTQLGGALF).

Belongs to the KdpC family. As to quaternary structure, the system is composed of three essential subunits: KdpA, KdpB and KdpC.

The protein localises to the cell inner membrane. Its function is as follows. Part of the high-affinity ATP-driven potassium transport (or Kdp) system, which catalyzes the hydrolysis of ATP coupled with the electrogenic transport of potassium into the cytoplasm. This subunit acts as a catalytic chaperone that increases the ATP-binding affinity of the ATP-hydrolyzing subunit KdpB by the formation of a transient KdpB/KdpC/ATP ternary complex. In Shewanella putrefaciens (strain CN-32 / ATCC BAA-453), this protein is Potassium-transporting ATPase KdpC subunit.